The following is a 424-amino-acid chain: Riboflavin biosynthesis protein RibBA (424 aa).

The DHBP synthase stretch occupies residues 1–206 (MFTCEAGIAS…VDDLITYRYT (206 aa)). D-ribulose 5-phosphate-binding positions include 32–33 (RE), D37, 145–149 (RPGHT), and E169. Mg(2+) is bound at residue E33. H148 is a binding site for Mg(2+). Residues 207–424 (YDSLVTKISS…YETVERMSCR (218 aa)) form a GTP cyclohydrolase II region. Residue 257 to 261 (RVHSE) coordinates GTP. Zn(2+) is bound by residues C262, C273, and C275. Residues Q278, 301–303 (EGR), and T323 each bind GTP. Catalysis depends on D335, which acts as the Proton acceptor; for GTP cyclohydrolase activity. Catalysis depends on R337, which acts as the Nucleophile; for GTP cyclohydrolase activity. GTP-binding residues include T358 and K363.

The protein in the N-terminal section; belongs to the DHBP synthase family. This sequence in the C-terminal section; belongs to the GTP cyclohydrolase II family. Mg(2+) serves as cofactor. Requires Mn(2+) as cofactor. It depends on Zn(2+) as a cofactor.

The enzyme catalyses D-ribulose 5-phosphate = (2S)-2-hydroxy-3-oxobutyl phosphate + formate + H(+). It carries out the reaction GTP + 4 H2O = 2,5-diamino-6-hydroxy-4-(5-phosphoribosylamino)-pyrimidine + formate + 2 phosphate + 3 H(+). Its pathway is cofactor biosynthesis; riboflavin biosynthesis; 2-hydroxy-3-oxobutyl phosphate from D-ribulose 5-phosphate: step 1/1. The protein operates within cofactor biosynthesis; riboflavin biosynthesis; 5-amino-6-(D-ribitylamino)uracil from GTP: step 1/4. Functionally, catalyzes the conversion of D-ribulose 5-phosphate to formate and 3,4-dihydroxy-2-butanone 4-phosphate. In terms of biological role, catalyzes the conversion of GTP to 2,5-diamino-6-ribosylamino-4(3H)-pyrimidinone 5'-phosphate (DARP), formate and pyrophosphate. The sequence is that of Riboflavin biosynthesis protein RibBA from Chlamydia trachomatis serovar D (strain ATCC VR-885 / DSM 19411 / UW-3/Cx).